A 186-amino-acid chain; its full sequence is Homeobox expressed in ES cells 1 (186 aa).

Positions 109–168 form a DNA-binding region, homeobox; it reads GRRPRTAFTRSQIEILENVFRVNSYPGIDIREELAGKLALDEDRIQIWFQNRRAKLKRSH.

The protein belongs to the ANF homeobox family. In terms of assembly, interacts (via N-terminus) with zyx.

It is found in the nucleus. Regulates the earliest stages of development of the anterior neural plate. Plays a role in forebrain development by inhibiting the expression of otx2 and pax6 in the rostral region of the anterior neural plate. Necessary for both neural differentiation and neural patterning. Controls Spemann organizer development. May act as a transcriptional repressor. The protein is Homeobox expressed in ES cells 1 of Xenopus tropicalis (Western clawed frog).